The primary structure comprises 326 residues: JNK1/MAPK8-associated membrane protein homolog (326 aa).

Residues 1–71 (MSSLSGHAST…CESCDTPLQP (71 aa)) are Lumenal-facing. A glycan (N-linked (GlcNAc...) asparagine) is linked at Asn-27. The helical transmembrane segment at 72 to 92 (YDWMYLLFIALLPLLLHMQFI) threads the bilayer. At 93–108 (RIARKYCRTRYYEVSE) the chain is on the cytoplasmic side. A helical transmembrane segment spans residues 109–129 (YLCVILENVIACVIAVLIYPP). The Lumenal portion of the chain corresponds to 130–166 (RFTFFLNGCSKTDIKEWYPACYNPRIGYTKTMRCTYE). The chain crosses the membrane as a helical span at residues 167–187 (VVFPLYSITFIHHLILIGSIL). At 188 to 208 (VLRSTLYCVLLYKTYNGKPFY) the chain is on the cytoplasmic side. 2 consecutive transmembrane segments (helical) span residues 209–229 (AAIV…GVVF) and 230–250 (YTFP…HLAL). Over 251–269 (EGKRPLKEMIVRIATSPTH) the chain is Cytoplasmic. The helical transmembrane segment at 270 to 290 (LIFLSITMLMLSFGVIAIIAP) threads the bilayer. Residues 291–296 (LDIPYR) are Lumenal-facing. Residues 297–317 (WSFLCIVPVPFIFYMATIPFS) traverse the membrane as a helical segment. Residues 318–326 (NPTTTMRLS) are Cytoplasmic-facing.

It is found in the endoplasmic reticulum membrane. In terms of biological role, facilitates degradation of misfolded endoplasmic reticulum (ER) proteins through the recruitment of components of the proteasome and endoplasmic reticulum-associated degradation (ERAD) system. Involved in ER stress response. This Caenorhabditis elegans protein is JNK1/MAPK8-associated membrane protein homolog.